Reading from the N-terminus, the 504-residue chain is Maturase K (504 aa).

This sequence belongs to the intron maturase 2 family. MatK subfamily.

The protein resides in the plastid. The protein localises to the chloroplast. Usually encoded in the trnK tRNA gene intron. Probably assists in splicing its own and other chloroplast group II introns. The sequence is that of Maturase K from Cardamine amara (Large bitter-cress).